The sequence spans 423 residues: Adenylosuccinate synthetase (423 aa).

Residues Gly-12–Lys-18 and Gly-40–Thr-42 contribute to the GTP site. The Proton acceptor role is filled by Asp-13. Residues Asp-13 and Gly-40 each contribute to the Mg(2+) site. Residues Asp-13–Lys-16, Asn-38–His-41, Thr-129, Arg-143, Gln-224, Thr-239, and Arg-303 contribute to the IMP site. The Proton donor role is filled by His-41. Ala-299–Arg-305 serves as a coordination point for substrate. Residues Arg-305, Lys-331–Asp-333, and Ser-412–Gly-414 each bind GTP.

It belongs to the adenylosuccinate synthetase family. As to quaternary structure, homodimer. Requires Mg(2+) as cofactor.

Its subcellular location is the cytoplasm. The enzyme catalyses IMP + L-aspartate + GTP = N(6)-(1,2-dicarboxyethyl)-AMP + GDP + phosphate + 2 H(+). The protein operates within purine metabolism; AMP biosynthesis via de novo pathway; AMP from IMP: step 1/2. Its function is as follows. Plays an important role in the de novo pathway of purine nucleotide biosynthesis. Catalyzes the first committed step in the biosynthesis of AMP from IMP. The polypeptide is Adenylosuccinate synthetase (Christiangramia forsetii (strain DSM 17595 / CGMCC 1.15422 / KT0803) (Gramella forsetii)).